Here is a 317-residue protein sequence, read N- to C-terminus: Small ribosomal subunit protein RACK1 (317 aa).

WD repeat units follow at residues 13–44, 61–91, 103–133, 146–178, 190–220, 231–260, and 281–311; these read GHSG…IMWK, GHSH…RLWD, GHTK…KLWN, SHTE…KVWN, GHTG…MLWD, DGGD…KIWD, and AEPP…RVWQ.

This sequence belongs to the WD repeat G protein beta family. Ribosomal protein RACK1 subfamily.

It localises to the cytoplasm. In terms of biological role, involved in the recruitment, assembly and/or regulation of a variety of signaling molecules. Interacts with a wide variety of proteins and plays a role in many cellular processes. Required for VANGL2 membrane localization, inhibits Wnt signaling and regulates cellular polarization and oriented cell division during gastrulation. This chain is Small ribosomal subunit protein RACK1 (gnb2l1), found in Danio rerio (Zebrafish).